A 277-amino-acid polypeptide reads, in one-letter code: Shikimate dehydrogenase (NADP(+)) (277 aa).

Shikimate-binding positions include 15–17 (SLS) and Thr62. Lys66 functions as the Proton acceptor in the catalytic mechanism. The shikimate site is built by Asn87 and Asp102. NADP(+) contacts are provided by residues 127–131 (GAGGA), 151–156 (NRTRDK), and Ile219. Tyr221 contacts shikimate. Gly242 serves as a coordination point for NADP(+).

The protein belongs to the shikimate dehydrogenase family. In terms of assembly, homodimer.

It carries out the reaction shikimate + NADP(+) = 3-dehydroshikimate + NADPH + H(+). It functions in the pathway metabolic intermediate biosynthesis; chorismate biosynthesis; chorismate from D-erythrose 4-phosphate and phosphoenolpyruvate: step 4/7. Involved in the biosynthesis of the chorismate, which leads to the biosynthesis of aromatic amino acids. Catalyzes the reversible NADPH linked reduction of 3-dehydroshikimate (DHSA) to yield shikimate (SA). The protein is Shikimate dehydrogenase (NADP(+)) of Bacillus mycoides (strain KBAB4) (Bacillus weihenstephanensis).